The following is a 575-amino-acid chain: uncharacterized protein (575 aa).

A signal peptide spans 1 to 28; that stretch reads MSNLLWKSLVVSPAVLGATLLVSSAAIA. The 65-residue stretch at 87–151 folds into the SLH domain; that stretch reads SVSQFSDVQP…DRVNELIATA (65 aa). Residues 158–196 adopt a coiled-coil conformation; that stretch reads KQDLATLQRLQEEFSAELATLRGRVDALEARTAELEANQ.

Belongs to the OprB family.

This is an uncharacterized protein from Nostoc sp. (strain PCC 7120 / SAG 25.82 / UTEX 2576).